The chain runs to 333 residues: DNA-directed RNA polymerase subunit alpha (333 aa).

An alpha N-terminal domain (alpha-NTD) region spans residues 1–235; sequence MQTNLLKPKA…EQLAVFAQLE (235 aa). The segment at 253 to 333 is alpha C-terminal domain (alpha-CTD); the sequence is FDPILLRPVD…NWPPQGLDKR (81 aa).

It belongs to the RNA polymerase alpha chain family. As to quaternary structure, homodimer. The RNAP catalytic core consists of 2 alpha, 1 beta, 1 beta' and 1 omega subunit. When a sigma factor is associated with the core the holoenzyme is formed, which can initiate transcription.

It catalyses the reaction RNA(n) + a ribonucleoside 5'-triphosphate = RNA(n+1) + diphosphate. In terms of biological role, DNA-dependent RNA polymerase catalyzes the transcription of DNA into RNA using the four ribonucleoside triphosphates as substrates. The polypeptide is DNA-directed RNA polymerase subunit alpha (Methylibium petroleiphilum (strain ATCC BAA-1232 / LMG 22953 / PM1)).